A 528-amino-acid chain; its full sequence is Drimenol cyclase drtB (528 aa).

Belongs to the HAD-like hydrolase superfamily.

It catalyses the reaction (2E,6E)-farnesyl diphosphate + H2O = (5S,9S,10S)-drim-7-en-11-ol + diphosphate. The protein operates within secondary metabolite biosynthesis; terpenoid biosynthesis. Its function is as follows. Drimenol cyclase; part of the gene cluster that mediates the biosynthesis of various drimane-type sesquiterpene esters, compounds that exhibit diverse biological activities and are widely present in eukaryotes. The pathway begins with the synthesis of the backbone drimenol by the terpene cyclase drtB using farnesyl pyrophosphate (FPP) as substrate. The cytochrome P450 monooxygenase drtD is then responsible for the hydroxylations at C-6, C-9 and C-12, as well as the oxidation of hydroxyl groups at C-6 and C-11 to a ketone and an aldehyde, respectively. Then, the biosynthesis can go in two directions, either the hydroxylated drimenol is further hydroxylated at C-2 and C-3 by an enzyme(s) not associated with the drt cluster, or the FAD-binding oxidoreductase drtC further oxidizes C-11 or C-12 to form the butyrolactone ring. DrtB, drtD and drtC are solely responsible for the formation of the different drimane structures observed during drimane sesquiterpenes biosynthesis. The polyketide synthase drtA synthesizes different lengths (C6 and C8) of PKS chains, which are then oxidized to varying degrees by the short-chain dehydrogenase drtF. Finally, these PKS chains are transferred onto drimane sesquiterpenes by the acyltransferase drtE, forming the sesquiterpene esters. In addition to the different fatty acyl-CoA chains produced by drtA, drtE is also able to use cinnamoyl-CoA as a substrate. This is Drimenol cyclase drtB from Aspergillus calidoustus.